Here is an 87-residue protein sequence, read N- to C-terminus: Small ribosomal subunit protein bS20 (87 aa).

Belongs to the bacterial ribosomal protein bS20 family.

Functionally, binds directly to 16S ribosomal RNA. This is Small ribosomal subunit protein bS20 from Neorickettsia sennetsu (strain ATCC VR-367 / Miyayama) (Ehrlichia sennetsu).